We begin with the raw amino-acid sequence, 604 residues long: MSNTNINVQSSTPKKSLGSSQYSLAGSSSSNLNNINNNNNNNNNNNNNSTGQENSIDDSGSSSFVNFPASEWLSKAMHKHPDILELRERTRPITQVKSYSRNKRSSKTEASHSINDTMLLKLIMQYFHEENLTTSLKKIQEETKVQFTPNEVDKDSLENLLRIGIKDTNWFGPLEDIEDADPEVETYHSYISEDSLNENGLEGEGNLIEDRYDESQISRNPDGTIKAATFNRLLLWLIGNFNGPDVNEFKKIFFLTYPSFTTAEAILNKFTQIYQLFDNIESAQVICFIRFWIEQHPTDFNEKLLAILNNFIEHQVAASHAKQLRAVINLKIENYKEARKEIKDPPEPKVPKNIFSPTLTFDDIDEEEIARQLCCIDFALYELIKPSEFLIKGWTKPQYRNKAVNLLNMMRRFNDFTKWIAASILNEQNSKGRSKLLGRFLKISEHLRANNNFHSLMAIYGGINNTHVFRTKAIRKDLSRQQQETYAELEKLFASENSFRNYRIAYKDAKPPCIPFLGIHLRDLAFVDESNPDRINNLLNLNKRRVIWRVIVNTMRYQPIPYYFLKVHQISLFLTELKTESEQPQLTLDLSSHDTVLPSSPSSK.

Residues Met-1 to Gly-26 are compositionally biased toward polar residues. Residues Met-1 to Ser-61 are disordered. The segment covering Ser-27–Ser-49 has biased composition (low complexity). Residues Thr-50–Ser-61 show a composition bias toward polar residues. One can recognise a LisH domain in the interval Asn-115–Phe-147. The N-terminal Ras-GEF domain occupies Pro-221–Tyr-335. Residues Asp-365 to Ser-591 form the Ras-GEF domain.

As to quaternary structure, component of the Sca1 complex composed of at least gefA, gefH, scaA, phr, and the protein phosphatase 2A subunits pppA and pho2B. Interacts directly with gefA and phr.

The protein localises to the cell membrane. Its function is as follows. Promotes the exchange of Ras-bound GDP by GTP. Component of the Sca1 complex, a regulator of cell motility, chemotaxis and signal relay. The Sca1 complex is recruited to the plasma membrane in a chemoattractant- and F-actin-dependent manner and is enriched at the leading edge of chemotaxing cells where it regulates F-actin dynamics and signal relay by controlling the activation of rasC and the downstream target of rapamycin complex 2 (TORC2)-Akt/protein kinase B (PKB) pathway. The protein is Ras guanine nucleotide exchange factor H (gefH) of Dictyostelium discoideum (Social amoeba).